The following is a 338-amino-acid chain: Nicotinate-nucleotide--dimethylbenzimidazole phosphoribosyltransferase (338 aa).

Glutamate 305 acts as the Proton acceptor in catalysis.

This sequence belongs to the CobT family.

It catalyses the reaction 5,6-dimethylbenzimidazole + nicotinate beta-D-ribonucleotide = alpha-ribazole 5'-phosphate + nicotinate + H(+). It functions in the pathway nucleoside biosynthesis; alpha-ribazole biosynthesis; alpha-ribazole from 5,6-dimethylbenzimidazole: step 1/2. Catalyzes the synthesis of alpha-ribazole-5'-phosphate from nicotinate mononucleotide (NAMN) and 5,6-dimethylbenzimidazole (DMB). The polypeptide is Nicotinate-nucleotide--dimethylbenzimidazole phosphoribosyltransferase (Rhizobium johnstonii (strain DSM 114642 / LMG 32736 / 3841) (Rhizobium leguminosarum bv. viciae)).